Here is a 397-residue protein sequence, read N- to C-terminus: Succinate--CoA ligase [ADP-forming] subunit beta (397 aa).

Residues 9-253 (KEILASYGVR…IREENPIEVE (245 aa)) enclose the ATP-grasp domain. ATP contacts are provided by residues lysine 50, 57–59 (GRG), valine 106, and glutamate 116. 2 residues coordinate Mg(2+): asparagine 208 and aspartate 222. Substrate-binding positions include asparagine 273 and 330–332 (GIV).

This sequence belongs to the succinate/malate CoA ligase beta subunit family. Heterotetramer of two alpha and two beta subunits. Requires Mg(2+) as cofactor.

It catalyses the reaction succinate + ATP + CoA = succinyl-CoA + ADP + phosphate. The catalysed reaction is GTP + succinate + CoA = succinyl-CoA + GDP + phosphate. It functions in the pathway carbohydrate metabolism; tricarboxylic acid cycle; succinate from succinyl-CoA (ligase route): step 1/1. In terms of biological role, succinyl-CoA synthetase functions in the citric acid cycle (TCA), coupling the hydrolysis of succinyl-CoA to the synthesis of either ATP or GTP and thus represents the only step of substrate-level phosphorylation in the TCA. The beta subunit provides nucleotide specificity of the enzyme and binds the substrate succinate, while the binding sites for coenzyme A and phosphate are found in the alpha subunit. This is Succinate--CoA ligase [ADP-forming] subunit beta from Flavobacterium johnsoniae (strain ATCC 17061 / DSM 2064 / JCM 8514 / BCRC 14874 / CCUG 350202 / NBRC 14942 / NCIMB 11054 / UW101) (Cytophaga johnsonae).